The sequence spans 549 residues: MKFNFKLILIILIINQILIINCKENKILEIYKSGNICPYPLHYRERTGSDDHDFDLGFVYARNDSNCLLPCPSPIYTSQEVNTLSLMIKITGTISFIASLILLLIYSPLINRMGYNRHTIGIFFLTFSVFLIMLTDIIYVHHGNDLICPQSHRYSRQNDSGCTITGILFQYGCIAAVLFWATLSLDLYLTLKKISTKKVEKWYLIILTLIALILTFVPLVKKSYGYLVTGLACWILDSTDQIIFFWAPFTAILGIGSILIVLVVYEIYKISKITKQNRGIFQSHIRPLLMVLFIFGQFLFILAFNALINNKYDEYSARMDSYIDCLFSSSSYSYLCRLKTFPFEMEFIVLFFLRLIGIEVLIFYGFTQQTKKILLHSFLVNNIFFKKYFIRLDGASLDFSTVDEELKVVNFSCNNNNNNNNSNSNSNSNLNNNLNNNLNNNNLNNNNNLNNLNNLNINNNLKNSQNNLNNSQQNEPLSSQKLSENGNVNVFMVESFDNNNSMINQFKHLEEKNNIILNSIISPVQEEQYEEDEINNKNINNNSNNDENN.

A signal peptide spans 1–22 (MKFNFKLILIILIINQILIINC). At 23-89 (KENKILEIYK…EVNTLSLMIK (67 aa)) the chain is on the extracellular side. N-linked (GlcNAc...) asparagine glycosylation is present at N63. Residues 90–110 (ITGTISFIASLILLLIYSPLI) form a helical membrane-spanning segment. Residues 111-119 (NRMGYNRHT) lie on the Cytoplasmic side of the membrane. The chain crosses the membrane as a helical span at residues 120–140 (IGIFFLTFSVFLIMLTDIIYV). Over 141–162 (HHGNDLICPQSHRYSRQNDSGC) the chain is Extracellular. N-linked (GlcNAc...) asparagine glycosylation occurs at N158. Residues 163–183 (TITGILFQYGCIAAVLFWATL) traverse the membrane as a helical segment. Residues 184 to 198 (SLDLYLTLKKISTKK) lie on the Cytoplasmic side of the membrane. The chain crosses the membrane as a helical span at residues 199–219 (VEKWYLIILTLIALILTFVPL). At 220–241 (VKKSYGYLVTGLACWILDSTDQ) the chain is on the extracellular side. The helical transmembrane segment at 242–262 (IIFFWAPFTAILGIGSILIVL) threads the bilayer. Topologically, residues 263-287 (VVYEIYKISKITKQNRGIFQSHIRP) are cytoplasmic. Residues 288 to 308 (LLMVLFIFGQFLFILAFNALI) form a helical membrane-spanning segment. Residues 309–346 (NNKYDEYSARMDSYIDCLFSSSSYSYLCRLKTFPFEME) are Extracellular-facing. The helical transmembrane segment at 347 to 367 (FIVLFFLRLIGIEVLIFYGFT) threads the bilayer. The Cytoplasmic portion of the chain corresponds to 368-549 (QQTKKILLHS…NNNSNNDENN (182 aa)). 2 stretches are compositionally biased toward low complexity: residues 417-474 (NNNN…SQQN) and 536-549 (NKNI…DENN). Disordered stretches follow at residues 417–483 (NNNN…QKLS) and 528–549 (QYEE…DENN). Residues 432-475 (NNLNNNLNNNNLNNNNNLNNLNNLNINNNLKNSQNNLNNSQQNE) adopt a coiled-coil conformation.

Belongs to the G-protein coupled receptor Fz/Smo family.

The protein resides in the membrane. The chain is Frizzled/smoothened-like sans CRD protein A (fscA) from Dictyostelium discoideum (Social amoeba).